We begin with the raw amino-acid sequence, 418 residues long: Actin-related protein 3-A (418 aa).

This sequence belongs to the actin family. ARP3 subfamily. Component of the Arp2/3 complex composed of actr2/arp2, actr3/arp3, arpc1 (arpc1a or arpc1b), arpc2, arpc3, arpc4 and arpc5.

It is found in the cytoplasm. The protein resides in the cytoskeleton. Its subcellular location is the cell projection. The protein localises to the nucleus. ATP-binding component of the Arp2/3 complex, a multiprotein complex that mediates actin polymerization upon stimulation by nucleation-promoting factor (NPF). The Arp2/3 complex mediates the formation of branched actin networks in the cytoplasm, providing the force for cell motility. Seems to contact the pointed end of the daughter actin filament. In addition to its role in the cytoplasmic cytoskeleton, the Arp2/3 complex also promotes actin polymerization in the nucleus, thereby regulating gene transcription and repair of damaged DNA. The Arp2/3 complex promotes homologous recombination (HR) repair in response to DNA damage by promoting nuclear actin polymerization, leading to drive motility of double-strand breaks (DSBs). The protein is Actin-related protein 3-A of Xenopus laevis (African clawed frog).